Reading from the N-terminus, the 390-residue chain is Chorismate synthase (390 aa).

NADP(+)-binding residues include Arg-48 and Arg-54. Residues 125-127 (RSS), 238-239 (NA), Gly-278, 293-297 (KPTSS), and Arg-319 contribute to the FMN site. The tract at residues 360–390 (KVPGNIINPTNPVTTQPDVRRAEDPEPDENS) is disordered. Positions 366–376 (INPTNPVTTQP) are enriched in polar residues.

Belongs to the chorismate synthase family. As to quaternary structure, homotetramer. The cofactor is FMNH2.

It carries out the reaction 5-O-(1-carboxyvinyl)-3-phosphoshikimate = chorismate + phosphate. The protein operates within metabolic intermediate biosynthesis; chorismate biosynthesis; chorismate from D-erythrose 4-phosphate and phosphoenolpyruvate: step 7/7. Functionally, catalyzes the anti-1,4-elimination of the C-3 phosphate and the C-6 proR hydrogen from 5-enolpyruvylshikimate-3-phosphate (EPSP) to yield chorismate, which is the branch point compound that serves as the starting substrate for the three terminal pathways of aromatic amino acid biosynthesis. This reaction introduces a second double bond into the aromatic ring system. The sequence is that of Chorismate synthase from Nitrosomonas eutropha (strain DSM 101675 / C91 / Nm57).